We begin with the raw amino-acid sequence, 813 residues long: Putative ATPase, plasma membrane-like (813 aa).

Topologically, residues 1-66 (MATGDSLEDI…KKKEHITLRF (66 aa)) are cytoplasmic. The helical transmembrane segment at 67 to 86 (FALMFKPLSWVIQAAAIMAM) threads the bilayer. At 87-94 (LFANGDGR) the chain is on the extracellular side. Residues 95–115 (QLFLGIVCLLIVNTIICYLKE) form a helical membrane-spanning segment. At 116–245 (DDAANVVAMA…GHFRKVVTEI (130 aa)) the chain is on the cytoplasmic side. A helical membrane pass occupies residues 246-266 (ENLCVISIAIGISIEVIVMYW). At 267-275 (IQRRNFSDV) the chain is on the extracellular side. The chain crosses the membrane as a helical span at residues 276–293 (INNLLVLVIGGIPLAMPT). Residues 294–555 (VLYVIMVTGS…ASRAILQQMK (262 aa)) lie on the Cytoplasmic side of the membrane. The active-site 4-aspartylphosphate intermediate is Asp-331. Asp-500 and Asp-504 together coordinate Mg(2+). Residues 556–577 (HYTIYAVSITIRVVFGFMFIAL) traverse the membrane as a helical segment. At 578–582 (IWKFD) the chain is on the extracellular side. A helical transmembrane segment spans residues 583–605 (FSPFMVLAIALLNEETTKAITMD). Topologically, residues 606–622 (NVTNPSPTPDSLKLKEI) are cytoplasmic. Residues 623–643 (FATGVVYGSYMALITVVFFWA) traverse the membrane as a helical segment. The Extracellular portion of the chain corresponds to 644-664 (AYRTDIFPRTFHVRDLRGNEA). The helical transmembrane segment at 665–685 (EMMCALYLQVSIMSQALFFVI) threads the bilayer. The Cytoplasmic segment spans residues 686-697 (QSRSWFFVERPG). The helical transmembrane segment at 698-718 (ELLFLSFVTVQTIATTLAVYA) threads the bilayer. At 719-726 (SWETARIE) the chain is on the extracellular side. Residues 727–747 (GIGWSWAGVIWLYNIIFFFPL) form a helical membrane-spanning segment. The Cytoplasmic segment spans residues 748–813 (DIMKFGIRYI…SQDLRGVGWV (66 aa)). Residue Ser-776 is modified to Phosphoserine.

The protein belongs to the cation transport ATPase (P-type) (TC 3.A.3) family. Type IIIA subfamily.

It localises to the membrane. The protein is Putative ATPase, plasma membrane-like of Arabidopsis thaliana (Mouse-ear cress).